Here is a 120-residue protein sequence, read N- to C-terminus: Aspartate 1-decarboxylase (120 aa).

Ser-25 serves as the catalytic Schiff-base intermediate with substrate; via pyruvic acid. Residue Ser-25 is modified to Pyruvic acid (Ser). Thr-57 lines the substrate pocket. Tyr-58 functions as the Proton donor in the catalytic mechanism. Substrate is bound at residue 73 to 75 (GAA).

It belongs to the PanD family. As to quaternary structure, heterooctamer of four alpha and four beta subunits. It depends on pyruvate as a cofactor. In terms of processing, is synthesized initially as an inactive proenzyme, which is activated by self-cleavage at a specific serine bond to produce a beta-subunit with a hydroxyl group at its C-terminus and an alpha-subunit with a pyruvoyl group at its N-terminus.

It localises to the cytoplasm. The catalysed reaction is L-aspartate + H(+) = beta-alanine + CO2. The protein operates within cofactor biosynthesis; (R)-pantothenate biosynthesis; beta-alanine from L-aspartate: step 1/1. Catalyzes the pyruvoyl-dependent decarboxylation of aspartate to produce beta-alanine. This chain is Aspartate 1-decarboxylase, found in Cupriavidus taiwanensis (strain DSM 17343 / BCRC 17206 / CCUG 44338 / CIP 107171 / LMG 19424 / R1) (Ralstonia taiwanensis (strain LMG 19424)).